The sequence spans 212 residues: Cyclin-dependent kinase inhibitor 3 (212 aa).

Residues 1–12 are compositionally biased toward polar residues; the sequence is MKPPSSIQTSEF. Positions 1-23 are disordered; it reads MKPPSSIQTSEFDSSDEEPIEDE. The interaction with CDK2 stretch occupies residues 1 to 34; the sequence is MKPPSSIQTSEFDSSDEEPIEDEQTPIQISWLPL. A compositionally biased stretch (acidic residues) spans 13-23; sequence DSSDEEPIEDE. In terms of domain architecture, Tyrosine-protein phosphatase spans 32 to 201; that stretch reads LPLSRVNYSQ…FRDKLAAHLS (170 aa). The Phosphocysteine intermediate role is filled by cysteine 140.

This sequence belongs to the protein-tyrosine phosphatase family. In terms of assembly, interacts with cyclin-dependent kinases such as CDK1, CDK2 and CDK3. Does not interact with CDK4. Interacts (via C-terminus) with phosphorylated CDK2 (via C-terminal helix). Interacts with MS4A3 (via C-terminus); the interaction enhances CDKN3 enzymatic activity.

It is found in the cytoplasm. The protein resides in the perinuclear region. The catalysed reaction is O-phospho-L-tyrosyl-[protein] + H2O = L-tyrosyl-[protein] + phosphate. The enzyme catalyses O-phospho-L-seryl-[protein] + H2O = L-seryl-[protein] + phosphate. It carries out the reaction O-phospho-L-threonyl-[protein] + H2O = L-threonyl-[protein] + phosphate. Functionally, may play a role in cell cycle regulation. Dual specificity phosphatase active toward substrates containing either phosphotyrosine or phosphoserine residues. Dephosphorylates CDK2 at 'Thr-160' in a cyclin-dependent manner. The chain is Cyclin-dependent kinase inhibitor 3 from Sus scrofa (Pig).